A 335-amino-acid polypeptide reads, in one-letter code: Thioredoxin reductase (335 aa).

FAD-binding positions include 22–25, 44–51, N60, and V93; these read SGPA and EGTSFGGA. The cysteines at positions 145 and 148 are disulfide-linked. The NADP(+) site is built by S166, H185, R191, I248, and Y268. Residues D288 and 295-298 contribute to the FAD site; that span reads RQAV. R295 lines the NADP(+) pocket.

It belongs to the class-II pyridine nucleotide-disulfide oxidoreductase family. As to quaternary structure, homodimer. It depends on FAD as a cofactor.

The protein resides in the cytoplasm. The enzyme catalyses [thioredoxin]-dithiol + NADP(+) = [thioredoxin]-disulfide + NADPH + H(+). This is Thioredoxin reductase from Mycobacterium tuberculosis (strain CDC 1551 / Oshkosh).